The chain runs to 313 residues: Urease accessory protein UreD (313 aa).

A disordered region spans residues 1-30 (MTDLSFPGQAASPGEGAGQTPSGGSGHRFD). The segment covering 15-26 (EGAGQTPSGGSG) has biased composition (gly residues).

Belongs to the UreD family. In terms of assembly, ureD, UreF and UreG form a complex that acts as a GTP-hydrolysis-dependent molecular chaperone, activating the urease apoprotein by helping to assemble the nickel containing metallocenter of UreC. The UreE protein probably delivers the nickel.

It localises to the cytoplasm. In terms of biological role, required for maturation of urease via the functional incorporation of the urease nickel metallocenter. The polypeptide is Urease accessory protein UreD (Chromohalobacter salexigens (strain ATCC BAA-138 / DSM 3043 / CIP 106854 / NCIMB 13768 / 1H11)).